Reading from the N-terminus, the 411-residue chain is AT-hook motif nuclear-localized protein 14 (411 aa).

Disordered stretches follow at residues 1–32, 54–164, 289–348, and 366–411; these read MDPN…QRLT, ASTG…LGSV, KDAA…HQAG, and THSR…QIPD. Residues 7-19 are compositionally biased toward basic residues; the sequence is HHHHQQQQLHHLH. Low complexity predominate over residues 20–29; that stretch reads QQQQQQQQQQ. The segment covering 54–66 has biased composition (polar residues); sequence ASTGNAVPSSNNG. The Bipartite nuclear localization signal motif lies at 105–113; it reads KRKRGRPRK. The segment at residues 105 to 117 is a DNA-binding region (a.T hook); it reads KRKRGRPRKYVTP. Low complexity-rich tracts occupy residues 120–135 and 144–159; these read ALAA…SSSA and VTGG…SKKS. The region spanning 165–305 is the PPC domain; sequence GKTGQCFTPH…GKGDASNSGS (141 aa). Positions 306–315 are enriched in polar residues; sequence RLTSPVSSGQ. Positions 374 to 390 are enriched in gly residues; the sequence is RGGGNSGHDGRGGGGYD.

Its subcellular location is the nucleus. Its function is as follows. Transcription factor that specifically binds AT-rich DNA sequences related to the nuclear matrix attachment regions (MARs). This is AT-hook motif nuclear-localized protein 14 from Arabidopsis thaliana (Mouse-ear cress).